A 148-amino-acid chain; its full sequence is Hemoglobin subunit alpha (148 aa).

Ser1 bears the N-acetylserine mark. In terms of domain architecture, Globin spans 8–148 (DYSAADRAEL…VCHELSSRYR (141 aa)). O2 is bound at residue His66. Residue His95 coordinates heme b.

Belongs to the globin family. As to quaternary structure, heterotetramer of two alpha chains and two beta chains. In terms of tissue distribution, red blood cells.

In terms of biological role, involved in oxygen transport from the lung to the various peripheral tissues. In Heterodontus portusjacksoni (Port Jackson shark), this protein is Hemoglobin subunit alpha (HBA).